We begin with the raw amino-acid sequence, 116 residues long: Putative transmembrane protein ORF116 (116 aa).

3 helical membrane passes run 20–40 (IVTL…AYAL), 53–73 (LLGG…TNSI), and 76–96 (FRGA…DVIN).

It localises to the host membrane. This is Putative transmembrane protein ORF116 from Acidianus bottle-shaped virus (isolate Italy/Pozzuoli) (ABV).